A 45-amino-acid chain; its full sequence is Large ribosomal subunit protein bL34c (45 aa).

It belongs to the bacterial ribosomal protein bL34 family.

The protein localises to the plastid. Its subcellular location is the chloroplast. In Emiliania huxleyi (Coccolithophore), this protein is Large ribosomal subunit protein bL34c.